A 528-amino-acid chain; its full sequence is MGNCCRSPAAVAREDVKSNYSGHDHARKDAAGGKKSAPIRVLSDVPKENIEDRYLLDRELGRGEFGVTYLCIERSSRDLLACKSISKRKLRTAVDIEDVKREVAIMKHLPKSSSIVTLKEACEDDNAVHLVMELCEGGELFDRIVARGHYTERAAAGVTKTIVEVVQLCHKHGVIHRDLKPENFLFANKKENSPLKAIDFGLSIFFKPGEKFSEIVGSPYYMAPEVLKRNYGPEIDIWSAGVILYILLCGVPPFWAESEQGVAQAILRGVIDFKREPWPNISETAKNLVRQMLEPDPKRRLTAKQVLEHPWIQNAKKAPNVPLGDVVKSRLKQFSVMNRFKRKALRVIAEFLSTEEVEDIKVMFNKMDTDNDGIVSIEELKAGLRDFSTQLAESEVQMLIEAVDTKGKGTLDYGEFVAVSLHLQKVANDEHLRKAFSYFDKDGNGYILPQELCDALKEDGGDDCVDVANDIFQEVDTDKDGRISYEEFAAMMKTGTDWRKASRHYSRGRFNSLSIKLMKDGSLNLGNE.

The N-myristoyl glycine moiety is linked to residue Gly2. Positions 17 to 32 are enriched in basic and acidic residues; it reads KSNYSGHDHARKDAAG. The disordered stretch occupies residues 17–37; it reads KSNYSGHDHARKDAAGGKKSA. A Phosphoserine modification is found at Ser43. Positions 54–312 constitute a Protein kinase domain; it reads YLLDRELGRG…AKQVLEHPWI (259 aa). Residues 60 to 68 and Lys83 each bind ATP; that span reads LGRGEFGVT. Catalysis depends on Asp178, which acts as the Proton acceptor. Position 218 is a phosphoserine (Ser218). Residues 318–348 are autoinhibitory domain; the sequence is APNVPLGDVVKSRLKQFSVMNRFKRKALRVI. EF-hand domains lie at 355–390, 391–426, 427–462, and 463–498; these read EEVEDIKVMFNKMDTDNDGIVSIEELKAGLRDFSTQ, LAESEVQMLIEAVDTKGKGTLDYGEFVAVSLHLQKV, ANDEHLRKAFSYFDKDGNGYILPQELCDALKEDGGD, and DCVDVANDIFQEVDTDKDGRISYEEFAAMMKTGTDW. Asp368, Asp370, Asp372, Glu379, Asp404, Thr410, Glu415, Asp440, Asp442, Asn444, Tyr446, Glu451, Asp476, Asp478, Asp480, and Arg482 together coordinate Ca(2+). The residue at position 484 (Ser484) is a Phosphoserine. Glu487 contacts Ca(2+). Ser522 bears the Phosphoserine mark.

The protein belongs to the protein kinase superfamily. Ser/Thr protein kinase family. CDPK subfamily.

It localises to the cell membrane. It carries out the reaction L-seryl-[protein] + ATP = O-phospho-L-seryl-[protein] + ADP + H(+). The enzyme catalyses L-threonyl-[protein] + ATP = O-phospho-L-threonyl-[protein] + ADP + H(+). With respect to regulation, activated by calcium. Autophosphorylation may play an important role in the regulation of the kinase activity. In terms of biological role, may play a role in signal transduction pathways that involve calcium as a second messenger. This is Calcium-dependent protein kinase 13 (CPK13) from Arabidopsis thaliana (Mouse-ear cress).